The following is a 308-amino-acid chain: MARMTDASPYLDFDRDTWRALRKSMPQVLTANEVEKLRGIGDRIDLTEVAEVYLPLSRLIHMQVEARQKLTAATEAFLGNPPTHVPFVIGVAGSVAVGKSTTARLLQVLLERWESHPKVDLVTTDGFLYPTAYLKEHGLMQRKGYPESYDRRALMRFVTDVKSGKPLVTAPLYSHVSYDIVPGEFQEVRQPDILILEGLNVLQTGPTLMVSDLFDFSVYVDARVDDIEKWYIDRFLKLRHTAFREPGAHFASFADMTDEEAYVQAREIWQSINLPNLIENILPTRVRASLVLRKGSHHLVDRVRMRKL.

93 to 100 (GSVAVGKS) is a binding site for ATP.

The protein belongs to the prokaryotic pantothenate kinase family.

It is found in the cytoplasm. It catalyses the reaction (R)-pantothenate + ATP = (R)-4'-phosphopantothenate + ADP + H(+). Its pathway is cofactor biosynthesis; coenzyme A biosynthesis; CoA from (R)-pantothenate: step 1/5. This is Pantothenate kinase from Corynebacterium aurimucosum (strain ATCC 700975 / DSM 44827 / CIP 107346 / CN-1) (Corynebacterium nigricans).